The sequence spans 400 residues: Phosphoglycerate kinase (400 aa).

Residues 22-24 (DFN), R38, 61-64 (HLGR), R120, and R153 each bind substrate. ATP contacts are provided by residues K206, G297, E328, and 354–357 (GGDT).

The protein belongs to the phosphoglycerate kinase family. Monomer.

Its subcellular location is the cytoplasm. The catalysed reaction is (2R)-3-phosphoglycerate + ATP = (2R)-3-phospho-glyceroyl phosphate + ADP. It functions in the pathway carbohydrate degradation; glycolysis; pyruvate from D-glyceraldehyde 3-phosphate: step 2/5. The polypeptide is Phosphoglycerate kinase (Campylobacter curvus (strain 525.92)).